Here is a 373-residue protein sequence, read N- to C-terminus: L-threonine 3-dehydrogenase, mitochondrial (373 aa).

NAD(+) contacts are provided by residues 62-67 (GGLGQL), 88-90 (DIR), 106-107 (DI), Y195, K199, and I225. Y195 acts as the Proton donor/acceptor in catalysis.

It belongs to the NAD(P)-dependent epimerase/dehydratase family. Homodimer.

It is found in the mitochondrion. The catalysed reaction is L-threonine + NAD(+) = (2S)-2-amino-3-oxobutanoate + NADH + H(+). The protein operates within amino-acid degradation; L-threonine degradation via oxydo-reductase pathway; glycine from L-threonine: step 1/2. Its function is as follows. Catalyzes the NAD(+)-dependent oxidation of L-threonine to 2-amino-3-ketobutyrate, mediating L-threonine catabolism. The chain is L-threonine 3-dehydrogenase, mitochondrial from Sus scrofa (Pig).